The following is a 111-amino-acid chain: MISTVALFWALCVVCVINMARYYSSLRALLVVLRGCDPLLYQYVDGGGFFTSHGQPSKQIRLVGYIFAQRYLDHHDPEFIRRCERLRGQFILTSALCGLVMVSLVGLILWY.

The next 2 membrane-spanning stretches (helical) occupy residues 1-21 (MIST…NMAR) and 90-110 (FILT…LILW).

This sequence belongs to the universal stress protein B family.

Its subcellular location is the cell inner membrane. The sequence is that of Universal stress protein B from Yersinia enterocolitica serotype O:8 / biotype 1B (strain NCTC 13174 / 8081).